The primary structure comprises 64 residues: Large ribosomal subunit protein uL30 (64 aa).

Belongs to the universal ribosomal protein uL30 family. As to quaternary structure, part of the 50S ribosomal subunit.

This Methylorubrum populi (strain ATCC BAA-705 / NCIMB 13946 / BJ001) (Methylobacterium populi) protein is Large ribosomal subunit protein uL30.